A 566-amino-acid chain; its full sequence is Berberine bridge enzyme-like D-2 (566 aa).

The signal sequence occupies residues M1–A33. Residues C42 and C103 are joined by a disulfide bond. N-linked (GlcNAc...) asparagine glycosylation occurs at N50. Positions S81–V257 constitute an FAD-binding PCMH-type domain. H118 carries the pros-8alpha-FAD histidine modification. N-linked (GlcNAc...) asparagine glycosylation is found at N364, N378, and N503.

The protein belongs to the oxygen-dependent FAD-linked oxidoreductase family. Requires FAD as cofactor.

The protein resides in the vacuole. It participates in alkaloid biosynthesis; nicotine biosynthesis. Involved in the biosynthesis of pyridine alkaloid natural products, leading mainly to the production of anabasine, anatabine, nicotine and nornicotine, effective deterrents against herbivores with antiparasitic and pesticide properties (neurotoxins); nornicotine serves as the precursor in the synthesis of the carcinogen compound N'-nitrosonornicotine (NNN). Catalyzes a late oxidation step subsequent to the pyridine ring condensation reaction in the biosynthesis of alkaloids. The sequence is that of Berberine bridge enzyme-like D-2 from Nicotiana tabacum (Common tobacco).